A 411-amino-acid polypeptide reads, in one-letter code: Ubiquitin-binding protein CUE5 (411 aa).

Residues 1 to 12 show a composition bias toward basic and acidic residues; that stretch reads MEEKEGIKDSSL. Disordered stretches follow at residues 1–102 and 142–411; these read MEEK…NPIL and ESGK…DDEM. Residue Lys-15 forms a Glycyl lysine isopeptide (Lys-Gly) (interchain with G-Cter in ubiquitin) linkage. Residues Ser-21 and Ser-36 each carry the phosphoserine modification. Residues 25 to 58 show a composition bias toward basic and acidic residues; sequence DISKTTDVDLNSDGKKDNDTSAKDGTPKVEEKVN. A Glycyl lysine isopeptide (Lys-Gly) (interchain with G-Cter in ubiquitin) cross-link involves residue Lys-59. Thr-70 carries the phosphothreonine modification. A Glycyl lysine isopeptide (Lys-Gly) (interchain with G-Cter in ubiquitin) cross-link involves residue Lys-76. Ser-91 is modified (phosphoserine). The region spanning 97-140 is the CUE domain; it reads KENPILQELKDAFPNLEEKYIKAVIIASQGVLSPAFNALLFLSD. Residue Lys-156 forms a Glycyl lysine isopeptide (Lys-Gly) (interchain with G-Cter in ubiquitin) linkage. Thr-167 carries the phosphothreonine modification. Positions 209–219 are enriched in basic and acidic residues; it reads NPNEREQHHED. Ser-220 carries the phosphoserine modification. Over residues 230–242 the composition is skewed to basic and acidic residues; the sequence is VEKDLPELTDRAG. The segment covering 245-256 has biased composition (polar residues); it reads LQDTANKVSNWI. Ser-309 and Ser-318 each carry phosphoserine. Position 346 is a phosphothreonine (Thr-346). The residue at position 348 (Ser-348) is a Phosphoserine. Thr-352 carries the phosphothreonine modification. Lys-354 participates in a covalent cross-link: Glycyl lysine isopeptide (Lys-Gly) (interchain with G-Cter in ubiquitin). 2 positions are modified to phosphothreonine: Thr-364 and Thr-367. An AIM motif is present at residues 373–376; the sequence is WQPL. Lys-396 participates in a covalent cross-link: Glycyl lysine isopeptide (Lys-Gly) (interchain with G-Cter in ubiquitin). Acidic residues predominate over residues 399–411; sequence DEDEFLINSDDEM. Ser-407 is modified (phosphoserine).

In terms of assembly, interacts with ATG8 (via AIM motif), CLB2, and ubiquitin (via CUE domain).

Its subcellular location is the cytoplasm. Connects the ubiquitin pathway to autophagy by functioning as a ubiquitin-ATG8 adapter and thus mediating autophagic clearance of ubiquitin conjugates under starvation conditions. The CUE5-dependent selective autophagy pathway plays an important role in clearance of cytotoxic protein aggregates. Not required for cytoplasmic to vacuole pathway (cvt), mitophagy, pexophagy, or ribophagy. The sequence is that of Ubiquitin-binding protein CUE5 from Saccharomyces cerevisiae (strain ATCC 204508 / S288c) (Baker's yeast).